Reading from the N-terminus, the 1249-residue chain is Protein lingerer (1249 aa).

The interval 1–66 (MSTQTRSGGG…VVKAKQPTAE (66 aa)) is disordered. Composition is skewed to gly residues over residues 7–30 (SGGG…GAAG) and 38–50 (GSTG…GAGG). The 41-residue stretch at 84–124 (KIQEKIQSLMETTQRSEEEVCCALQECDSDLDRAVIFLLET) folds into the UBA domain. 10 disordered regions span residues 132 to 312 (TTSK…LKPE), 350 to 375 (SAGA…ASNV), 454 to 506 (MPPM…PPTT), 549 to 579 (YAAA…AVEM), 616 to 717 (TTGT…TSVS), 738 to 922 (PYGQ…SLPI), 1016 to 1042 (GRFT…TGSG), 1124 to 1149 (QQQS…APSM), 1164 to 1186 (KQSF…AGTT), and 1211 to 1249 (QNMH…TGPN). The span at 186–209 (NRGGSGNQRSGGPGRGGRAGGYRD) shows a compositional bias: gly residues. A compositionally biased stretch (basic and acidic residues) spans 210–227 (GGGDRDRDRDRNGYDKGG). 2 stretches are compositionally biased toward gly residues: residues 228-240 (EGGG…GGDG) and 248-269 (DGPG…GGPR). Low complexity predominate over residues 350-369 (SAGAGAQQQQSQQSTQTGVP). Polar residues predominate over residues 457–494 (MNTSSSLSAEQSQYFSTLSSQNSNLQPTPSAVGFQQQP). Composition is skewed to low complexity over residues 549–559 (YAAAATQQPPV), 616–639 (TTGT…PATV), and 647–664 (QSQL…APQQ). Polar residues predominate over residues 678–705 (ASSQIMPGQGTTEALSSQNDGLANSYSR). The span at 706 to 717 (TNASGSVSTSVS) shows a compositional bias: low complexity. Polar residues-rich tracts occupy residues 738 to 769 (PYGQ…TASY) and 777 to 809 (GYNN…NVNA). Residues 811–861 (QPPSSSVTNNVVPNNNTGNSVGGVSNQSNLPVNNNAVNSSSNNNAGGYLSS) show a composition bias toward low complexity. The segment covering 862-873 (QYPVSQTSSAFP) has biased composition (polar residues). Composition is skewed to low complexity over residues 874 to 884 (SQQNYQNSSQN), 892 to 922 (NSNT…SLPI), and 1023 to 1034 (NNSSPVSNVPSS). Residues 1124–1138 (QQQSKGQTVANQQSG) are compositionally biased toward polar residues. Positions 1216-1249 (DSNSSGQRPQNNNQGKTASKQQGYSASTYWTGPN) are enriched in polar residues.

It is found in the cytoplasm. Its function is as follows. Acts in the nervous system to mediate the control of copulatory organs during courtship. The sequence is that of Protein lingerer from Anopheles gambiae (African malaria mosquito).